We begin with the raw amino-acid sequence, 247 residues long: 14-3-3 protein gamma (247 aa).

M1 is modified (N-acetylmethionine; in 14-3-3 protein gamma; alternate; partial). Position 2 is an N-acetylvaline; in 14-3-3 protein gamma, N-terminally processed; partial (V2). Residue V2 is modified to N-acetylvaline; partial. Positions 2 to 166 are required for interaction with SPATA18/MIEAP (isoform 2) but dispensable for binding to SPATA18/MIEAP (isoform 1); sequence VDREQLVQKA…AHEISKEHMQ (165 aa). The tract at residues 2-247 is interaction with SPATA18/MIEAP; sequence VDREQLVQKA…QDDDGGEGNN (246 aa). S71 is modified (phosphoserine). At Y133 the chain carries Phosphotyrosine. A Phosphothreonine modification is found at T145. S215 is modified (phosphoserine). Residue T234 is modified to Phosphothreonine. Residue S235 is modified to Phosphoserine.

This sequence belongs to the 14-3-3 family. Homodimer. Part of a complex that contains DSG3, PKP1, YAP1 and YWHAG; the complex is required for localization of DSG3 and YAP1 to the cell membrane in keratinocytes. Interacts with SAMSN1. Interacts with RAF1, SSH1 and CRTC2/TORC2. Interacts with ABL1 (phosphorylated form); the interaction retains it in the cytoplasm. Interacts with GAB2. Interacts with MDM4 (phosphorylated); negatively regulates MDM4 activity toward TP53. Interacts with PKA-phosphorylated AANAT and SIRT2. Interacts with the 'Thr-369' phosphorylated form of DAPK2. Interacts with PI4KB, TBC1D22A and TBC1D22B. Interacts with SLITRK1. Interacts with LRRK2; this interaction is dependent on LRRK2 phosphorylation. Interacts with MARK2 and MARK3. Interacts with MEFV. Interacts with ENDOG, TSC2 and PIK3C3; interaction with ENDOG weakens its interaction with TSC2 and PIK3C3. Interacts with (phosphorylated) WDR24. Interacts with BEST1; this interaction promotes L-glutamate channel activity leading to the positive regulation of NMDA glutamate receptor activity through the L-glutamate secretion. Interacts with PKP1 (when phosphorylated); the interaction results in translocation of PKP1 to the cytoplasm and loss of intercellular adhesion in keratinocytes. Interacts with SPATA18/MIEAP (isoforms 1 and 2); a protein that also plays a role in MALM. Post-translationally, phosphorylated by various PKC isozymes. In terms of tissue distribution, highly expressed in brain, skeletal muscle, and heart.

It localises to the cytoplasm. It is found in the cytosol. Its subcellular location is the mitochondrion matrix. Its function is as follows. Adapter protein implicated in the regulation of a large spectrum of both general and specialized signaling pathways. Binds to a large number of partners, usually by recognition of a phosphoserine or phosphothreonine motif. Binding generally results in the modulation of the activity of the binding partner. Promotes inactivation of WDR24 component of the GATOR2 complex by binding to phosphorylated WDR24. Participates in the positive regulation of NMDA glutamate receptor activity by promoting the L-glutamate secretion through interaction with BEST1. Reduces keratinocyte intercellular adhesion, via interacting with PKP1 and sequestering it in the cytoplasm, thereby reducing its incorporation into desmosomes. Plays a role in mitochondrial protein catabolic process (also named MALM) that promotes the degradation of damaged proteins inside mitochondria. This is 14-3-3 protein gamma from Homo sapiens (Human).